The primary structure comprises 313 residues: Protein FixB (313 aa).

Position 255-283 (Leu255–Asp283) interacts with FAD.

It belongs to the ETF alpha-subunit/FixB family. Heterodimer of FixA and FixB.

It participates in amine and polyamine metabolism; carnitine metabolism. Functionally, required for anaerobic carnitine reduction. May bring reductant to CaiA. The sequence is that of Protein FixB from Escherichia coli O17:K52:H18 (strain UMN026 / ExPEC).